The chain runs to 516 residues: 3-phosphoshikimate 1-carboxyvinyltransferase, chloroplastic (516 aa).

Residues 1–72 constitute a chloroplast transit peptide; sequence MAQINNMAQG…RISASVATAQ (72 aa). Residues Lys95, Ser96, and Arg100 each contribute to the 3-phosphoshikimate site. Lys95 contributes to the phosphoenolpyruvate binding site. Gly173 and Arg203 together coordinate phosphoenolpyruvate. 3-phosphoshikimate-binding residues include Ser250, Ser251, Gln252, Ser278, Asp403, and Lys430. Gln252 is a phosphoenolpyruvate binding site. Catalysis depends on Asp403, which acts as the Proton acceptor. 3 residues coordinate phosphoenolpyruvate: Arg434, Arg476, and Lys501.

The protein belongs to the EPSP synthase family. As to expression, mostly expressed in flower petals, and, to a lower extent, in roots, stems and anthers, but barely in leaves.

The protein localises to the plastid. Its subcellular location is the chloroplast. It catalyses the reaction 3-phosphoshikimate + phosphoenolpyruvate = 5-O-(1-carboxyvinyl)-3-phosphoshikimate + phosphate. It functions in the pathway metabolic intermediate biosynthesis; chorismate biosynthesis; chorismate from D-erythrose 4-phosphate and phosphoenolpyruvate: step 6/7. Competitively inhibited by glyphosate. Catalyzes the transfer of the enolpyruvyl moiety of phosphoenolpyruvate (PEP) to the 5-hydroxyl of shikimate-3-phosphate (S3P) to produce enolpyruvyl shikimate-3-phosphate and inorganic phosphate. Involved in the accumulation of volatile benzoides in flowers, scent attracting pollinators (e.g. the night-active hawkmoth pollinator Manduca sexta). The polypeptide is 3-phosphoshikimate 1-carboxyvinyltransferase, chloroplastic (Petunia hybrida (Petunia)).